The chain runs to 365 residues: Zinc finger TRAF-type-containing protein 1-A (365 aa).

The tract at residues 1-56 is disordered; that stretch reads MSEEREAPGPLASSSAGLGAEVGQEEVPGGAGPARLLLLPSDSDGPPKKRLRSEAE. Residues 72-117 form an RING-type; degenerate zinc finger; that stretch reads CTVCLDLPKASVYQCTNGHLMCAGCFIHLLADSRLKEEQATCPNCR. Residues 113–186 form a TRAF-type zinc finger; that stretch reads CPNCRCEISK…PWEGPYHELT (74 aa).

Belongs to the ZFTRAF1 family.

It localises to the cytoplasm. The polypeptide is Zinc finger TRAF-type-containing protein 1-A (Xenopus laevis (African clawed frog)).